The chain runs to 180 residues: Large ribosomal subunit protein uL22 (180 aa).

Disordered stretches follow at residues 1-20 (MTKPVYSKTPSNPEKSCKSR) and 160-180 (PKPAEESAQKKKSVATQEISA). Polar residues predominate over residues 8 to 20 (KTPSNPEKSCKSR).

Belongs to the universal ribosomal protein uL22 family.

This chain is Large ribosomal subunit protein uL22 (rpl17), found in Dictyostelium discoideum (Social amoeba).